A 504-amino-acid polypeptide reads, in one-letter code: uncharacterized protein (504 aa).

The next 3 membrane-spanning stretches (helical) occupy residues 146–166 (TSAGYAKIVGCALGFPVINIA), 196–216 (SSAAILITGAGAIGTALADVL), and 330–350 (SMALTMALLAAAVLYASVAVA). An a nucleoside 3',5'-cyclic phosphate-binding site is contributed by 372–492 (FLNIDVPLQA…EIAYGVARTR (121 aa)).

The protein resides in the cell membrane. This is an uncharacterized protein from Mycobacterium tuberculosis (strain CDC 1551 / Oshkosh).